We begin with the raw amino-acid sequence, 509 residues long: Ribonuclease Y (509 aa).

The helical transmembrane segment at 3–23 (WILYVILPAVCIILGWTIRWL) threads the bilayer. In terms of domain architecture, KH spans 199 to 284 (TVSTVSLPSD…EIVQKVTREI (86 aa)). The region spanning 325–418 (VLQHSKEVAI…VQIADAISAA (94 aa)) is the HD domain.

Belongs to the RNase Y family.

The protein resides in the cell membrane. Its function is as follows. Endoribonuclease that initiates mRNA decay. The sequence is that of Ribonuclease Y from Treponema denticola (strain ATCC 35405 / DSM 14222 / CIP 103919 / JCM 8153 / KCTC 15104).